The following is a 78-amino-acid chain: Large ribosomal subunit protein bL28 (78 aa).

The interval 1-28 (MSRRCQVRGTKPEFGNNVSHSQRHTKRR) is disordered.

It belongs to the bacterial ribosomal protein bL28 family.

The polypeptide is Large ribosomal subunit protein bL28 (Cutibacterium acnes (strain DSM 16379 / KPA171202) (Propionibacterium acnes)).